Here is a 216-residue protein sequence, read N- to C-terminus: Ribosomal RNA small subunit methyltransferase G (216 aa).

Residues G81, F86, 130-131 (AE), and R144 each bind S-adenosyl-L-methionine.

Belongs to the methyltransferase superfamily. RNA methyltransferase RsmG family.

It localises to the cytoplasm. The catalysed reaction is guanosine(527) in 16S rRNA + S-adenosyl-L-methionine = N(7)-methylguanosine(527) in 16S rRNA + S-adenosyl-L-homocysteine. Specifically methylates the N7 position of guanine in position 527 of 16S rRNA. The sequence is that of Ribosomal RNA small subunit methyltransferase G from Rhodospirillum centenum (strain ATCC 51521 / SW).